Reading from the N-terminus, the 306-residue chain is Protein-methionine-sulfoxide reductase catalytic subunit MsrP (306 aa).

Residues 1 to 45 (MLIRHAPDLTDNDVTDHSLYLKRRTLMAGVAGLGVAGASASHAQA) constitute a signal peptide (tat-type signal). Mo-molybdopterin contacts are provided by residues N69, 72 to 73 (YE), C127, T162, N210, R215, and 226 to 228 (GIK).

The protein belongs to the MsrP family. In terms of assembly, heterodimer of a catalytic subunit (MsrP) and a heme-binding subunit (MsrQ). It depends on Mo-molybdopterin as a cofactor. In terms of processing, predicted to be exported by the Tat system. The position of the signal peptide cleavage has not been experimentally proven.

The protein resides in the periplasm. The catalysed reaction is L-methionyl-[protein] + a quinone + H2O = L-methionyl-(S)-S-oxide-[protein] + a quinol. The enzyme catalyses L-methionyl-[protein] + a quinone + H2O = L-methionyl-(R)-S-oxide-[protein] + a quinol. Its function is as follows. Part of the MsrPQ system that repairs oxidized periplasmic proteins containing methionine sulfoxide residues (Met-O), using respiratory chain electrons. Thus protects these proteins from oxidative-stress damage caused by reactive species of oxygen and chlorine generated by the host defense mechanisms. MsrPQ is essential for the maintenance of envelope integrity under bleach stress, rescuing a wide series of structurally unrelated periplasmic proteins from methionine oxidation. The catalytic subunit MsrP is non-stereospecific, being able to reduce both (R-) and (S-) diastereoisomers of methionine sulfoxide. The polypeptide is Protein-methionine-sulfoxide reductase catalytic subunit MsrP (Caulobacter vibrioides (strain ATCC 19089 / CIP 103742 / CB 15) (Caulobacter crescentus)).